Reading from the N-terminus, the 449-residue chain is Glucose-6-phosphate isomerase (449 aa).

Glu291 serves as the catalytic Proton donor. Active-site residues include His312 and Lys426.

This sequence belongs to the GPI family.

Its subcellular location is the cytoplasm. The catalysed reaction is alpha-D-glucose 6-phosphate = beta-D-fructose 6-phosphate. Its pathway is carbohydrate biosynthesis; gluconeogenesis. It participates in carbohydrate degradation; glycolysis; D-glyceraldehyde 3-phosphate and glycerone phosphate from D-glucose: step 2/4. In terms of biological role, catalyzes the reversible isomerization of glucose-6-phosphate to fructose-6-phosphate. The polypeptide is Glucose-6-phosphate isomerase (Streptococcus pyogenes serotype M4 (strain MGAS10750)).